Reading from the N-terminus, the 146-residue chain is Large ribosomal subunit protein uL15 (146 aa).

Residues 1 to 42 (MTIKLHDLQPARGSKTTRTRVGRGEASKGKTAGRGTKGTKAR) form a disordered region.

This sequence belongs to the universal ribosomal protein uL15 family. In terms of assembly, part of the 50S ribosomal subunit.

Functionally, binds to the 23S rRNA. The chain is Large ribosomal subunit protein uL15 from Mycobacterium leprae (strain Br4923).